Consider the following 132-residue polypeptide: Nickel-responsive regulator (132 aa).

Positions 76, 87, 89, and 95 each coordinate Ni(2+).

This sequence belongs to the transcriptional regulatory CopG/NikR family. As to quaternary structure, homotetramer. Requires Ni(2+) as cofactor.

Transcriptional repressor of the nikABCDE operon. Is active in the presence of excessive concentrations of intracellular nickel. The protein is Nickel-responsive regulator of Klebsiella pneumoniae subsp. pneumoniae (strain ATCC 700721 / MGH 78578).